Consider the following 189-residue polypeptide: Homeobox protein HD-2 (189 aa).

A DNA-binding region (homeobox; TALE-type) is located at residues 119–181 (KPRTRANFPM…NARRRILPFM (63 aa)).

Belongs to the TALE/KNOX homeobox family.

The protein resides in the nucleus. The sequence is that of Homeobox protein HD-2 (HD-2) from Encephalitozoon cuniculi (strain GB-M1) (Microsporidian parasite).